The following is a 215-amino-acid chain: uncharacterized protein (215 aa).

The next 6 helical transmembrane spans lie at 21 to 40, 50 to 69, 95 to 117, 122 to 144, 157 to 179, and 185 to 207; these read IIKYIVIFFLFYIISTVLIN, LIFSVICLLISLISFSTIIF, FVAIFICTTVGLIFVLPVIYVFF, LEIALFFISVWMIFVLSSSLVVL, NFVGTFIMPLLIPNIIMTGLILQ, and LIFIMIGINLIFLPVSFCLSAYL.

This sequence belongs to the CcmB/CycW/HelB family.

It is found in the cell membrane. This is an uncharacterized protein from Rickettsia prowazekii (strain Madrid E).